Reading from the N-terminus, the 355-residue chain is Uroporphyrinogen decarboxylase (355 aa).

Substrate is bound by residues 27-31 (RQAGR), aspartate 78, tyrosine 155, serine 210, and histidine 328.

This sequence belongs to the uroporphyrinogen decarboxylase family. In terms of assembly, homodimer.

Its subcellular location is the cytoplasm. The enzyme catalyses uroporphyrinogen III + 4 H(+) = coproporphyrinogen III + 4 CO2. It functions in the pathway porphyrin-containing compound metabolism; protoporphyrin-IX biosynthesis; coproporphyrinogen-III from 5-aminolevulinate: step 4/4. Its function is as follows. Catalyzes the decarboxylation of four acetate groups of uroporphyrinogen-III to yield coproporphyrinogen-III. The polypeptide is Uroporphyrinogen decarboxylase (Pseudomonas aeruginosa (strain LESB58)).